Here is a 594-residue protein sequence, read N- to C-terminus: UvrABC system protein C (594 aa).

The GIY-YIG domain occupies 14–91; it reads DQPGCYLMKD…IKKHDPKYNI (78 aa). The UVR domain occupies 196–231; the sequence is KEVRSELETKMYEASEKLEFERAKELRDQIAHIDAI.

Belongs to the UvrC family. As to quaternary structure, interacts with UvrB in an incision complex.

The protein resides in the cytoplasm. Functionally, the UvrABC repair system catalyzes the recognition and processing of DNA lesions. UvrC both incises the 5' and 3' sides of the lesion. The N-terminal half is responsible for the 3' incision and the C-terminal half is responsible for the 5' incision. In Bacillus anthracis (strain A0248), this protein is UvrABC system protein C.